A 180-amino-acid polypeptide reads, in one-letter code: Large ribosomal subunit protein uL6 (180 aa).

Belongs to the universal ribosomal protein uL6 family. Part of the 50S ribosomal subunit.

In terms of biological role, this protein binds to the 23S rRNA, and is important in its secondary structure. It is located near the subunit interface in the base of the L7/L12 stalk, and near the tRNA binding site of the peptidyltransferase center. This is Large ribosomal subunit protein uL6 from Clostridium botulinum (strain Loch Maree / Type A3).